The following is a 221-amino-acid chain: Transcriptional regulator GfcR (221 aa).

Positions 35 to 59 (ASWLVERSQPTDNSQSSSANNPTEA) are disordered. A compositionally biased stretch (polar residues) spans 42-57 (SQPTDNSQSSSANNPT).

It belongs to the purine/pyrimidine phosphoribosyltransferase family. GfcR subfamily.

DNA-binding transcriptional regulator that functions as a regulator of central sugar catabolic pathways. This Haloquadratum walsbyi (strain DSM 16790 / HBSQ001) protein is Transcriptional regulator GfcR.